The sequence spans 87 residues: U14-lycotoxin-Ls1c (87 aa).

Residues 1–20 form the signal peptide; it reads MNSKVFAVLLLLALLTCILS. The region spanning 21 to 66 is the WAP domain; sequence EKYCPTPRNTSCKKMNIKNNCCRDSDCTSNAFCCAEPCGNFCHKAS. 5 cysteine pairs are disulfide-bonded: cysteine 24–cysteine 54, cysteine 32–cysteine 58, cysteine 41–cysteine 53, cysteine 42–cysteine 80, and cysteine 47–cysteine 62.

Belongs to the venom protein 11 family. 01 (wap-1) subfamily. Contains 5 disulfide bonds. As to expression, expressed by the venom gland.

It localises to the secreted. Has antibacterial activity. This chain is U14-lycotoxin-Ls1c, found in Lycosa singoriensis (Wolf spider).